We begin with the raw amino-acid sequence, 357 residues long: Maleylacetate reductase 1 (357 aa).

It belongs to the iron-containing alcohol dehydrogenase family.

The enzyme catalyses 3-oxoadipate + NAD(+) = maleylacetate + NADH + H(+). It catalyses the reaction 3-oxoadipate + NADP(+) = maleylacetate + NADPH + H(+). It participates in aromatic compound metabolism; 3-chlorocatechol degradation. Functionally, plays a major role in the degradation of chloroaromatic compounds by channeling maleylacetate and some of its substituted derivatives into the 3-oxoadipate pathway. This enzyme converts maleylacetate and 2-chloromaleylacetate with similar efficiencies. In Rhodococcus opacus (Nocardia opaca), this protein is Maleylacetate reductase 1 (macA).